Here is a 727-residue protein sequence, read N- to C-terminus: Elongation factor 2 (727 aa).

In terms of domain architecture, tr-type G spans 19–260 (DQIRNMGICA…MSIKHLPNPL (242 aa)). Residues 28–35 (AHIDHGKT), 94–98 (DTPGH), and 148–151 (NKVD) each bind GTP. His-603 is subject to Diphthamide.

Belongs to the TRAFAC class translation factor GTPase superfamily. Classic translation factor GTPase family. EF-G/EF-2 subfamily.

The protein localises to the cytoplasm. In terms of biological role, catalyzes the GTP-dependent ribosomal translocation step during translation elongation. During this step, the ribosome changes from the pre-translocational (PRE) to the post-translocational (POST) state as the newly formed A-site-bound peptidyl-tRNA and P-site-bound deacylated tRNA move to the P and E sites, respectively. Catalyzes the coordinated movement of the two tRNA molecules, the mRNA and conformational changes in the ribosome. The polypeptide is Elongation factor 2 (Methanococcus maripaludis (strain C5 / ATCC BAA-1333)).